A 925-amino-acid chain; its full sequence is MRNLKLFERFKSTQVHAFTTQDSPSTSSNGSPRMMKFLGHPKSKSRSLLPHGFPTTDLLEPPLDSYLKPIDLVESLSNLYRRIESSSESEASMLYLEQYAVLRSLGDAKLLRRCLLNARRHAIDVPCKVVFSAWLRFFRREHELVGVESMDCNGLASECPKTSLTHGCDLNVDDEGCECSTVCEDEFGSDDVKISKADEFSGLDEVSDISFCVGSEKAKCVRSRIAALSRPFEAMLYGSFVESTTSEIDFSENGISIEAMLALNIYSRIKRVDLFRVETVFELLQLASKFCCDDLKSECEARLAASVTDLDKALTFVEYALEERTTLLLSACLQVFLRELPQSLHNPKVMRFFCSSEAKEQLAFLGSECVFLLYYFLSQVGMEEKLTTDTMLILLERTREFARTNWQKALSLHQMGCVLFERKDYKAAQFHFRLASSLGHVYSLAGVSRTEYKQGKRYSAYRLMNFLISNHKPHGWMYQERSLYNVGVEKLKDLATATELDPTLSFPYKYRAVMKFEQKQIKEAFQEIDRLIQFKLSPECLELRAWLYLATGDRESCLRDLRAVLSLEPNYVVFGGKMRDDLVEALTAQCIEVESEADCWVRLFDRWSAVDDVASLAVVHQMLQNDPSKNFLRFRQSLLLLRLNCQGAAMRCLRMAWNLATSEAERLVYEGWLLYDMGYVEETLTKAEEAISIQRSFEAFFLKAYALADKNLDADEISCVVQVLEEALKCPSDGLRKGQALNNLGSIYINLGMLDQAETAYKNAIEIKHIRARQGLARVYFLKNQRKEACEEMTKLIEKSCSKAAAYEKRSEYCEREKAKEDLDMATTLDPLRTYPYRYRAAVLMDDQRETEAVEELSKAIAFRPELQTLHLRAAFHEATGNLSLATQDCEAALCLDPNHTETLHLYSRSKDQASSIDNTIFGLD.

Positions Ser-207–Val-307 constitute a BTB domain. Residues Ala-409–Tyr-442 form a TPR 1 repeat. Residues Lys-509–Gln-533 adopt a coiled-coil conformation. TPR repeat units lie at residues Pro-538–Tyr-571, Ala-664–Phe-697, Gly-738–Arg-771, Arg-773–Lys-803, Thr-834–Leu-867, and Thr-869–His-900.

Belongs to the ETO1 family. In terms of assembly, interacts with the C-terminal domain of ACS5. In terms of tissue distribution, constitutively expressed in green and etiolated seedlings.

It functions in the pathway protein modification; protein ubiquitination. In terms of biological role, potential regulator of the ethylene pathway, which acts by regulating the stability of 1-aminocyclopropane-1-carboxylate synthase (ACS) enzymes. May act as a substrate-specific adapter that connects ACS enzymes, such as ACS5, to ubiquitin ligase complexes, leading to proteasomal degradation of ACS enzymes. The protein is ETO1-like protein 2 (EOL2) of Arabidopsis thaliana (Mouse-ear cress).